The following is a 193-amino-acid chain: uncharacterized protein (193 aa).

Disordered regions lie at residues 1–21 (MPKG…APPL), 53–96 (GAPA…PWPS), and 114–136 (SGPE…ASAS). The segment covering 53–70 (GAPAGGAPAAGGRSLPQG) has biased composition (low complexity). The span at 71–95 (PSAPAPPPPPGLGPPSERPCPPPWP) shows a compositional bias: pro residues. Low complexity predominate over residues 116–127 (PEAAASPLAPGP).

This is an uncharacterized protein from Bos taurus (Bovine).